Reading from the N-terminus, the 136-residue chain is Large ribosomal subunit protein uL16 (136 aa).

This sequence belongs to the universal ribosomal protein uL16 family. As to quaternary structure, part of the 50S ribosomal subunit.

Its function is as follows. Binds 23S rRNA and is also seen to make contacts with the A and possibly P site tRNAs. The polypeptide is Large ribosomal subunit protein uL16 (Enterobacter sp. (strain 638)).